Consider the following 198-residue polypeptide: NAD(P)H dehydrogenase (quinone) (198 aa).

The Flavodoxin-like domain occupies 4–189 (ILVLYYSMYG…SIARYQGEYV (186 aa)). Residues 10–15 (SMYGHI) and 78–80 (TRF) each bind FMN. Position 12 (Tyr12) interacts with NAD(+). Residue Trp98 participates in substrate binding. FMN-binding positions include 113–118 (STGTGG) and His133.

Belongs to the WrbA family. FMN is required as a cofactor.

The catalysed reaction is a quinone + NADH + H(+) = a quinol + NAD(+). It carries out the reaction a quinone + NADPH + H(+) = a quinol + NADP(+). The polypeptide is NAD(P)H dehydrogenase (quinone) (Salmonella paratyphi C (strain RKS4594)).